A 129-amino-acid chain; its full sequence is Lysozyme C, milk isozyme (129 aa).

A C-type lysozyme domain is found at 1–129 (KIFSKCELAR…LSKYLASCNL (129 aa)). Disulfide bonds link cysteine 6–cysteine 127, cysteine 30–cysteine 115, cysteine 65–cysteine 80, and cysteine 76–cysteine 94. Residues glutamate 35 and aspartate 53 contribute to the active site. Lysine 82, aspartate 85, asparagine 87, aspartate 90, and aspartate 91 together coordinate Ca(2+).

This sequence belongs to the glycosyl hydrolase 22 family. In terms of assembly, monomer. Requires Ca(2+) as cofactor.

The enzyme catalyses Hydrolysis of (1-&gt;4)-beta-linkages between N-acetylmuramic acid and N-acetyl-D-glucosamine residues in a peptidoglycan and between N-acetyl-D-glucosamine residues in chitodextrins.. Its function is as follows. Lysozymes have primarily a bacteriolytic function; those in tissues and body fluids are associated with the monocyte-macrophage system and enhance the activity of immunoagents. The chain is Lysozyme C, milk isozyme from Canis lupus familiaris (Dog).